Reading from the N-terminus, the 69-residue chain is M-poneratoxin-Dq4e (69 aa).

Residues 1–25 (MKLSAFTLAFALILMMAIMYNMAEA) form the signal peptide. The propeptide occupies 26–39 (AALADADADAEAIA).

Expressed by the venom gland.

It is found in the secreted. Its function is as follows. May have antimicrobial properties, like most ant linear peptides. In addition, when tested in vitro on the parasite Trypanosoma cruzi (responsible of the Chagas disease), is able to moderately reduce the number of the three forms (epimastigote, trypomastigote and amastigote) by inducing cell death through necrosis. This chain is M-poneratoxin-Dq4e, found in Dinoponera quadriceps (South American ant).